The primary structure comprises 842 residues: Elongation factor 2 (842 aa).

Residues threonine 17–valine 346 enclose the tr-type G domain. Residues alanine 26 to serine 33, asparagine 158 to aspartate 161, and serine 213 to leucine 215 each bind GTP. The residue at position 699 (histidine 699) is a Diphthamide.

The protein belongs to the TRAFAC class translation factor GTPase superfamily. Classic translation factor GTPase family. EF-G/EF-2 subfamily.

The protein resides in the cytoplasm. It catalyses the reaction GTP + H2O = GDP + phosphate + H(+). Functionally, catalyzes the GTP-dependent ribosomal translocation step during translation elongation. During this step, the ribosome changes from the pre-translocational (PRE) to the post-translocational (POST) state as the newly formed A-site-bound peptidyl-tRNA and P-site-bound deacylated tRNA move to the P and E sites, respectively. Catalyzes the coordinated movement of the two tRNA molecules, the mRNA and conformational changes in the ribosome. This chain is Elongation factor 2 (EFT2), found in Candida albicans (strain SC5314 / ATCC MYA-2876) (Yeast).